The chain runs to 130 residues: MSLMDPLANALNHVSNCEGVGKNVAYLKPASKLIGRVLKVMQDQGYIGNFEYIEDGKAGVYKVDLIGQINKCGAVKPRYAVKYQEFEKFEKRYLPAKGFGLLIVSTPKGLMTHDEARTAGVGGRLISYVY.

The protein belongs to the universal ribosomal protein uS8 family. As to quaternary structure, part of the 30S ribosomal subunit.

Its function is as follows. One of the primary rRNA binding proteins, it binds directly to 16S rRNA central domain where it helps coordinate assembly of the platform of the 30S subunit. The protein is Small ribosomal subunit protein uS8 of Methanococcus vannielii (strain ATCC 35089 / DSM 1224 / JCM 13029 / OCM 148 / SB).